Reading from the N-terminus, the 333-residue chain is HTH-type transcriptional repressor PurR (333 aa).

Residues 2-56 (ATIKDVAKMAGVSTTTVSHVINKTRFVAKETEQQVLQAIKNLNYSPSAVARSLKV) form the HTH lacI-type domain. The H-T-H motif DNA-binding region spans 4 to 23 (IKDVAKMAGVSTTTVSHVIN). A DNA-binding region spans residues 48-56 (SAVARSLKV). The hypoxanthine site is built by Tyr-73, Lys-189, Thr-191, Phe-220, and Asp-274.

In terms of assembly, homodimer.

Its pathway is purine metabolism; purine nucleotide biosynthesis [regulation]. Its function is as follows. Is the main repressor of the genes involved in the de novo synthesis of purine nucleotides, regulating purB, purC, purEK, purF, purHD, purL, purMN and guaBA expression. PurR is allosterically activated to bind its cognate DNA by binding the purine corepressors, hypoxanthine or guanine, thereby effecting transcription repression. The protein is HTH-type transcriptional repressor PurR of Histophilus somni (strain 2336) (Haemophilus somnus).